A 217-amino-acid chain; its full sequence is 25 kDa ookinete surface antigen (217 aa).

A signal peptide spans 1-16; the sequence is MNKLYSLFLFLFIQLS. An EGF-like 1; truncated domain is found at 30 to 59; that stretch reads CKRGFLIQMSGHLECKCENDLVLVNEETCE. EGF-like domains lie at 61 to 106, 106 to 150, and 153 to 193; these read KVLK…NVCI, IPNE…NKCS, and GETK…SICT. 9 disulfides stabilise this stretch: C65–C80, C74–C92, C94–C105, C110–C120, C115–C133, C135–C149, C157–C168, C161–C177, and C179–C192. N112 carries N-linked (GlcNAc...) asparagine glycosylation. 2 N-linked (GlcNAc...) asparagine glycosylation sites follow: N165 and N187. A lipid anchor (GPI-anchor amidated serine) is attached at S196. The propeptide at 197–217 is removed in mature form; it reads AYNILNLSIMFILFSVCFFIM. The N-linked (GlcNAc...) asparagine glycan is linked to N202.

It is found in the cell membrane. This chain is 25 kDa ookinete surface antigen, found in Plasmodium falciparum (isolate NF54).